Here is a 738-residue protein sequence, read N- to C-terminus: Dipeptidyl peptidase 3 (738 aa).

Ala2 is modified (N-acetylalanine). A Zn(2+)-binding site is contributed by His450. Glu451 is an active-site residue. Zn(2+) is bound by residues His455 and Glu508.

Belongs to the peptidase M49 family. Zn(2+) serves as cofactor.

It is found in the cytoplasm. The protein localises to the cytosol. It catalyses the reaction Release of an N-terminal dipeptide from a peptide comprising four or more residues, with broad specificity. Also acts on dipeptidyl 2-naphthylamides.. Its function is as follows. Cleaves and degrades bioactive peptides, including angiotensin, Leu-enkephalin and Met-enkephalin. Also cleaves Arg-Arg-beta-naphthylamide (in vitro). The sequence is that of Dipeptidyl peptidase 3 (Dpp3) from Mus musculus (Mouse).